A 777-amino-acid polypeptide reads, in one-letter code: Intraflagellar transport protein 80 homolog (777 aa).

WD repeat units follow at residues 12–50 (KHQELVSCVGWTTAEELYSCSDDHQIVKWNLLTSETSLI), 104–143 (AHCGAVLAGRWNYEGTALVTVGEDGQVKIWSKTGMLRSTL), 145–185 (QQGT…LQWK), 186–225 (AHDGIILKVDWNSVNDLILSAGEDCKYKVWDSYGRVLYGS), 227–265 (PHEHPITSVAWAPDGELFAVGSFHTLRLCDKTGWSYALE), 267–306 (PNTGSIFNIAWSIDGTQIAGACGNGHVVFAHVVEQRWEWK), and 504–542 (KLGTMVHTLAWCDTCNILCGIQDTRFTVWYYPNTIYVDR).

In terms of assembly, component of the IFT complex B, at least composed of IFT20, IFT22, IFT25, IFT27, IFT46, IFT52, TRAF3IP1/IFT54, IFT57, IFT74, IFT80, IFT81, and IFT88. Interacts with IFT88. Interacts with IFT57 and IFT70B.

It localises to the cytoplasm. The protein localises to the cytoskeleton. Its subcellular location is the cilium basal body. The protein resides in the cilium axoneme. Component of the intraflagellar transport (IFT) complex B, which is essential for the development and maintenance of motile and sensory cilia. The protein is Intraflagellar transport protein 80 homolog (Ift80) of Mus musculus (Mouse).